We begin with the raw amino-acid sequence, 219 residues long: Poxin (219 aa).

Residue H17 is the Proton donor of the active site. The active-site Shared with catalytic histidine of dimeric partner is Y138. The active-site Proton acceptor; shared with catalytic histidine of dimeric partner is the K142.

The protein belongs to the poxin family. As to quaternary structure, homodimer.

It carries out the reaction 2',3'-cGAMP + H2O = Gp(2'-5')Ap(3') + H(+). Nuclease that is responsible for viral evasion of host cGAS-STING innate immunity. Cleaves 2',3'-cGAMP which is produced by host cGAS following recognition of cytosolic DNA and blocks the subsequent 2',3'-cGAMP-mediated activation of TMEM173/STING, which normally spreads to adjacent cells and activates the interferon and NF-kappa-B immune responses. This chain is Poxin (OPG188), found in Homo sapiens (Human).